Here is a 478-residue protein sequence, read N- to C-terminus: Zinc metalloproteinase/disintegrin (478 aa).

The signal sequence occupies residues 1–20 (MIEVLLVTICLAVFPYPGSS). The propeptide occupies 21 to 190 (IILESGNVDD…KASQLYLTPE (170 aa)). Gln-191 carries the post-translational modification Pyrrolidone carboxylic acid. Positions 197-392 (RYIELAIVVD…SKPQCIINAP (196 aa)) constitute a Peptidase M12B domain. Residues Glu-200 and Asp-284 each coordinate Ca(2+). Intrachain disulfides connect Cys-308–Cys-387, Cys-349–Cys-371, and Cys-351–Cys-354. A Zn(2+)-binding site is contributed by His-333. Glu-334 is a catalytic residue. 2 residues coordinate Zn(2+): His-337 and His-343. The Ca(2+) site is built by Cys-387 and Asn-390. A propeptide spanning residues 393–410 (LRTDTVSTPVSGNEFLEA) is cleaved from the precursor. Residues 400–478 (TPVSGNEFLE…GQSADCPRNS (79 aa)) form the Disintegrin domain. 6 cysteine pairs are disulfide-bonded: Cys-414–Cys-429, Cys-416–Cys-424, Cys-423–Cys-446, Cys-437–Cys-443, Cys-442–Cys-467, and Cys-455–Cys-474. The Cell attachment site motif lies at 459-461 (RGD). A disordered region spans residues 459-478 (RGDNPDDRCTGQSADCPRNS). Over residues 468-478 (TGQSADCPRNS) the composition is skewed to polar residues.

It belongs to the venom metalloproteinase (M12B) family. P-II subfamily. P-IIa sub-subfamily. Monomer. It depends on Zn(2+) as a cofactor. Not N-glycosylated. As to expression, expressed by the venom gland.

The protein resides in the secreted. It catalyses the reaction Cleavage of 3-Asn-|-Gln-4, 10-His-|-Leu-11 and 14-Ala-|-Leu-15 in the insulin B chain, and the bond Z-Gly-Pro-|-Leu-Gly-Pro in a small molecule substrate of microbial collagenase.. Functionally, zinc protease that induces hemorrhage. In terms of biological role, inhibits platelet aggregation induced by ADP, thrombin, and collagen. Acts by inhibiting fibrinogen interaction with platelet receptors GPIIb/GPIIIa (ITGA2B/ITGB3). The chain is Zinc metalloproteinase/disintegrin from Protobothrops flavoviridis (Habu).